We begin with the raw amino-acid sequence, 295 residues long: SPX domain-containing protein 1 (295 aa).

In terms of domain architecture, SPX spans 1–166 (MKFGKSLSSQ…GALIRLPFIQ (166 aa)). The interval 197–227 (NELPVSSEDGRGDSTNEDKPSNPSSSLVNGG) is disordered. Residues 204–216 (EDGRGDSTNEDKP) show a composition bias toward basic and acidic residues.

In terms of assembly, interacts (via SPX domain) with PHR2 (via C-terminus). Interacts with RLI1 in the nucleus to prevents its positive regulation of leaf inclination during phosphate (Pi) starvation.

It is found in the nucleus. In terms of biological role, involved in plant adaptation to phosphate (Pi) starvation. Inhibits PHR2 DNA-binding activity via a Pi-dependent protein interaction. Suppresses the regulation on expression of PT2 by PHR2 and accumulation of shoot Pi. Optimizes growth under phosphate-limited conditions through a negative feedback loop of the PSI (phosphate starvation-induced) signaling pathway. Regulates the expression of SPX2, SPX3 and SPX5. May be an important link between signal transduction pathways related to phosphate starvation and cold stress. Together with SPX2, plays a negative role in the regulation of leaf inclination by preventing RLI1 transcription factor activity in Pi depleted conditions. This chain is SPX domain-containing protein 1, found in Oryza sativa subsp. indica (Rice).